Reading from the N-terminus, the 488-residue chain is Alkaline nuclease (488 aa).

The protein belongs to the herpesviridae alkaline nuclease family. Interacts with major DNA-binding protein; this interaction increases the nuclease processivity of the alkaline exonuclease.

Its subcellular location is the host nucleus. It is found in the host cytoplasm. Its function is as follows. Plays a role in processing non linear or branched viral DNA intermediates in order to promote the production of mature packaged unit-length linear progeny viral DNA molecules. Exhibits endonuclease and exonuclease activities and accepts both double-stranded and single-stranded DNA as substrate. Exonuclease digestion of DNA is in the 5'-&gt; 3' direction and the products are 5'-monophosphate nucleosides. Additionally, forms a recombinase with the major DNA-binding protein, which displays strand exchange activity. The sequence is that of Alkaline nuclease (U70) from Homo sapiens (Human).